A 360-amino-acid chain; its full sequence is UPF0324 membrane protein plu2856 (360 aa).

9 helical membrane passes run 20–42 (LIPG…NIPW), 47–69 (GLGT…YPLL), 104–126 (VGIT…AIWL), 136–155 (QTVI…AIMA), 167–189 (VAVA…PWFY), 239–256 (MIRV…SRYI), 277–299 (WFAV…AAIV), 304–326 (NIDT…VSAI), and 333–355 (PILL…NLGI).

The protein belongs to the UPF0324 family.

It localises to the cell membrane. The sequence is that of UPF0324 membrane protein plu2856 from Photorhabdus laumondii subsp. laumondii (strain DSM 15139 / CIP 105565 / TT01) (Photorhabdus luminescens subsp. laumondii).